A 241-amino-acid polypeptide reads, in one-letter code: Phycocyanobilin:ferredoxin oxidoreductase (241 aa).

This sequence belongs to the HY2 family.

It catalyses the reaction (2R,3Z)-phycocyanobilin + 4 oxidized [2Fe-2S]-[ferredoxin] = biliverdin IXalpha + 4 reduced [2Fe-2S]-[ferredoxin] + 4 H(+). In terms of biological role, catalyzes the four-electron reduction of biliverdin IX-alpha (2-electron reduction at both the A and D rings); the reaction proceeds via an isolatable 2-electron intermediate, 181,182-dihydrobiliverdin. The polypeptide is Phycocyanobilin:ferredoxin oxidoreductase (Prochlorococcus marinus (strain MIT 9301)).